Consider the following 227-residue polypeptide: Myogenin (227 aa).

One can recognise a bHLH domain in the interval 82–133 (DRRRAATLREKRRLKKVNEAFEALKRSTLLNPNQRLPKVEILRSAIQYIERL). The segment at 147–196 (QRELRYRPAAPQPAAPSECGSGSSSCSPEWSTQLEFGTNPADHLLSDDQA) is disordered. The span at 161–175 (APSECGSGSSSCSPE) shows a compositional bias: low complexity.

In terms of assembly, homodimer and heterodimer. Efficient DNA binding requires dimerization with another bHLH protein.

It localises to the nucleus. Acts as a transcriptional activator that promotes transcription of muscle-specific target genes and plays a role in muscle differentiation. Induces fibroblasts to differentiate into myoblasts. Probable sequence specific DNA-binding protein. This chain is Myogenin (MYOG), found in Gallus gallus (Chicken).